We begin with the raw amino-acid sequence, 181 residues long: Probable cobalt-precorrin-6B C(15)-methyltransferase (decarboxylating) (181 aa).

S-adenosyl-L-methionine contacts are provided by residues threonine 16, 40–44, aspartate 61, and alanine 89; that span reads GCGSG.

The protein belongs to the methyltransferase superfamily. Archaeal-type CbiT family.

It carries out the reaction Co-precorrin-6B + S-adenosyl-L-methionine = Co-precorrin-7 + S-adenosyl-L-homocysteine + CO2. The protein operates within cofactor biosynthesis; adenosylcobalamin biosynthesis; cob(II)yrinate a,c-diamide from sirohydrochlorin (anaerobic route): step 8/10. In terms of biological role, catalyzes the methylation of C-15 in cobalt-precorrin-6B followed by the decarboxylation of C-12 to form cobalt-precorrin-7. The sequence is that of Probable cobalt-precorrin-6B C(15)-methyltransferase (decarboxylating) from Methanococcus maripaludis (strain C5 / ATCC BAA-1333).